The chain runs to 785 residues: Endonuclease MutS2 (785 aa).

Gly-335–Thr-342 contributes to the ATP binding site. The 76-residue stretch at Leu-710–Arg-785 folds into the Smr domain. The interval Val-764–Arg-785 is disordered.

Belongs to the DNA mismatch repair MutS family. MutS2 subfamily. Homodimer. Binds to stalled ribosomes, contacting rRNA.

Functionally, endonuclease that is involved in the suppression of homologous recombination and thus may have a key role in the control of bacterial genetic diversity. Its function is as follows. Acts as a ribosome collision sensor, splitting the ribosome into its 2 subunits. Detects stalled/collided 70S ribosomes which it binds and splits by an ATP-hydrolysis driven conformational change. Acts upstream of the ribosome quality control system (RQC), a ribosome-associated complex that mediates the extraction of incompletely synthesized nascent chains from stalled ribosomes and their subsequent degradation. Probably generates substrates for RQC. This Halalkalibacterium halodurans (strain ATCC BAA-125 / DSM 18197 / FERM 7344 / JCM 9153 / C-125) (Bacillus halodurans) protein is Endonuclease MutS2.